The sequence spans 260 residues: Indole-3-glycerol phosphate synthase (260 aa).

It belongs to the TrpC family.

It catalyses the reaction 1-(2-carboxyphenylamino)-1-deoxy-D-ribulose 5-phosphate + H(+) = (1S,2R)-1-C-(indol-3-yl)glycerol 3-phosphate + CO2 + H2O. It participates in amino-acid biosynthesis; L-tryptophan biosynthesis; L-tryptophan from chorismate: step 4/5. The sequence is that of Indole-3-glycerol phosphate synthase from Desulfotalea psychrophila (strain LSv54 / DSM 12343).